A 364-amino-acid polypeptide reads, in one-letter code: Sulfate/thiosulfate import ATP-binding protein CysA (364 aa).

The ABC transporter domain maps to 3 to 237 (IEIARIKKSF…PATRFVLEFM (235 aa)). Position 35–42 (35–42 (GPSGSGKT)) interacts with ATP.

Belongs to the ABC transporter superfamily. Sulfate/tungstate importer (TC 3.A.1.6) family. As to quaternary structure, the complex is composed of two ATP-binding proteins (CysA), two transmembrane proteins (CysT and CysW) and a solute-binding protein (CysP).

It is found in the cell inner membrane. The enzyme catalyses sulfate(out) + ATP + H2O = sulfate(in) + ADP + phosphate + H(+). It carries out the reaction thiosulfate(out) + ATP + H2O = thiosulfate(in) + ADP + phosphate + H(+). Part of the ABC transporter complex CysAWTP involved in sulfate/thiosulfate import. Responsible for energy coupling to the transport system. This Salmonella typhi protein is Sulfate/thiosulfate import ATP-binding protein CysA.